A 280-amino-acid chain; its full sequence is Type II restriction enzyme MboI (280 aa).

Belongs to the DpnII type II restriction endonuclease family.

It carries out the reaction Endonucleolytic cleavage of DNA to give specific double-stranded fragments with terminal 5'-phosphates.. A P subtype restriction enzyme that recognizes the double-stranded unmethylated sequence 5'-GATC-3' and cleaves before G-1. The sequence is that of Type II restriction enzyme MboI (mboIR) from Moraxella bovis.